The primary structure comprises 164 residues: Transcriptional repressor NrdR (164 aa).

Residues 3-34 (CPKCNYHKSSVVDSRQAEDGNTIRRRRECEQC) fold into a zinc finger. One can recognise an ATP-cone domain in the interval 49-139 (LLVIKKDGTR…VYKSFKDVDE (91 aa)).

This sequence belongs to the NrdR family. Zn(2+) is required as a cofactor.

Negatively regulates transcription of bacterial ribonucleotide reductase nrd genes and operons by binding to NrdR-boxes. The polypeptide is Transcriptional repressor NrdR (Streptococcus pyogenes serotype M6 (strain ATCC BAA-946 / MGAS10394)).